Here is a 681-residue protein sequence, read N- to C-terminus: Transferrin (681 aa).

Positions 1-18 (MALKLLTLIALTCAAANA) are cleaved as a signal peptide. Transferrin-like domains follow at residues 23–364 (YKLC…ERGH) and 371–676 (VRLC…DVIS). Cystine bridges form between cysteine 26–cysteine 60 and cysteine 35–cysteine 51. 2 residues coordinate Fe(3+): aspartate 75 and tyrosine 108. 4 cysteine pairs are disulfide-bonded: cysteine 132-cysteine 228, cysteine 181-cysteine 207, cysteine 204-cysteine 213, and cysteine 271-cysteine 284. Residues threonine 134, arginine 138, valine 140, and glycine 141 each coordinate hydrogencarbonate. N-linked (GlcNAc...) asparagine glycosylation occurs at asparagine 218. Tyrosine 222 serves as a coordination point for Fe(3+). Asparagine 355 carries an N-linked (GlcNAc...) asparagine glycan. Disulfide bonds link cysteine 374–cysteine 411 and cysteine 384–cysteine 402. A glycan (N-linked (GlcNAc...) asparagine) is linked at asparagine 418. Intrachain disulfides connect cysteine 478-cysteine 551, cysteine 506-cysteine 678, and cysteine 579-cysteine 596.

It belongs to the transferrin family.

Its subcellular location is the secreted. Transferrins are iron binding transport proteins which bind Fe(3+) ion in association with the binding of an anion, usually bicarbonate. This transferrin binds only one Fe(3+) ion per protein molecule. The protein is Transferrin of Manduca sexta (Tobacco hawkmoth).